An 842-amino-acid chain; its full sequence is Glycogen phosphorylase, muscle form (842 aa).

At Ser2 the chain carries N-acetylserine. Ser15 bears the Phosphoserine; by PHK; in form phosphorylase A mark. Positions 43 and 76 each coordinate AMP. Phosphotyrosine is present on residues Tyr204 and Tyr227. 310–319 (RRFKSSKFGC) is a binding site for AMP. A Phosphoserine modification is found at Ser430. A Phosphotyrosine modification is found at Tyr473. Position 681 is an N6-(pyridoxal phosphate)lysine (Lys681). A phosphoserine mark is found at Ser747 and Ser748.

The protein belongs to the glycogen phosphorylase family. As to quaternary structure, homodimer. Homotetramer; to form the enzymatically active phosphorylase A. The cofactor is pyridoxal 5'-phosphate. In terms of processing, phosphorylation of Ser-15 converts phosphorylase B (unphosphorylated) to phosphorylase A.

It catalyses the reaction [(1-&gt;4)-alpha-D-glucosyl](n) + phosphate = [(1-&gt;4)-alpha-D-glucosyl](n-1) + alpha-D-glucose 1-phosphate. Allosterically regulated through the non-covalent binding of metabolites, being activated by AMP and inhibited by ATP, ADP, and glucose-6-phosphate. The activity is also controlled by post-translational modifications including phosphorylation. Allosteric enzyme that catalyzes the rate-limiting step in glycogen catabolism, the phosphorolytic cleavage of glycogen to produce glucose-1-phosphate, and plays a central role in maintaining cellular and organismal glucose homeostasis. This chain is Glycogen phosphorylase, muscle form, found in Bos taurus (Bovine).